Consider the following 939-residue polypeptide: AP-2 complex subunit alpha-2 (939 aa).

A 1,2-diacyl-sn-glycero-3-phospho-(1D-myo-inositol-3,4,5-trisphosphate) is bound by residues 11-12 (RG), lysine 43, tyrosine 53, and 57-61 (KYVCK). Residues 612–681 (LAKLKKKKGP…AGPPPSSGGS (70 aa)) form a disordered region. The span at 646-667 (PASTSAVSTPSPSADLLGLGAA) shows a compositional bias: low complexity. Residues 668-677 (PPAPAGPPPS) are compositionally biased toward pro residues.

This sequence belongs to the adaptor complexes large subunit family. As to quaternary structure, adaptor protein complex 2 (AP-2) is a heterotetramer composed of two large adaptins (alpha-type subunit AP2A1 or AP2A2 and beta-type subunit AP2B1), a medium adaptin (mu-type subunit AP2M1) and a small adaptin (sigma-type subunit AP2S1). Binds EPN1, EPS15, AMPH, SNAP91 and BIN1. Interacts with HIP1. Interacts with DGKD. Interacts with DENND1A, DENND1B and DENND1C. Interacts with FCHO1 and DAB2. Interacts with ATAT1; this interaction is required for efficient alpha-tubulin acetylation by ATAT1. Interacts with KIAA1107. Together with AP2B1 and AP2M1, it interacts with ADAM10; this interaction facilitates ADAM10 endocytosis from the plasma membrane during long-term potentiation in hippocampal neurons. Interacts with CLN3 (via dileucine motif). Interacts with ABCB11; this interaction regulates cell membrane expression of ABCB11 through its internalization in a clathrin-dependent manner and its subsequent degradation. Interacts with Cacfd1. Interacts with DNAJC6. As to expression, expressed in the brain (at protein level).

It localises to the cell membrane. The protein localises to the membrane. It is found in the coated pit. In terms of biological role, component of the adaptor protein complex 2 (AP-2). Adaptor protein complexes function in protein transport via transport vesicles in different membrane traffic pathways. Adaptor protein complexes are vesicle coat components and appear to be involved in cargo selection and vesicle formation. AP-2 is involved in clathrin-dependent endocytosis in which cargo proteins are incorporated into vesicles surrounded by clathrin (clathrin-coated vesicles, CCVs) which are destined for fusion with the early endosome. The clathrin lattice serves as a mechanical scaffold but is itself unable to bind directly to membrane components. Clathrin-associated adaptor protein (AP) complexes which can bind directly to both the clathrin lattice and to the lipid and protein components of membranes are considered to be the major clathrin adaptors contributing the CCV formation. AP-2 also serves as a cargo receptor to selectively sort the membrane proteins involved in receptor-mediated endocytosis. AP-2 seems to play a role in the recycling of synaptic vesicle membranes from the presynaptic surface. AP-2 recognizes Y-X-X-[FILMV] (Y-X-X-Phi) and [ED]-X-X-X-L-[LI] endocytosis signal motifs within the cytosolic tails of transmembrane cargo molecules. AP-2 may also play a role in maintaining normal post-endocytic trafficking through the ARF6-regulated, non-clathrin pathway. During long-term potentiation in hippocampal neurons, AP-2 is responsible for the endocytosis of ADAM10. The AP-2 alpha subunit binds polyphosphoinositide-containing lipids, positioning AP-2 on the membrane. The AP-2 alpha subunit acts via its C-terminal appendage domain as a scaffolding platform for endocytic accessory proteins. The AP-2 alpha and AP-2 sigma subunits are thought to contribute to the recognition of the [ED]-X-X-X-L-[LI] motif. This Homo sapiens (Human) protein is AP-2 complex subunit alpha-2 (AP2A2).